We begin with the raw amino-acid sequence, 1226 residues long: DNA-directed RNA polymerase subunit beta (1226 aa).

Belongs to the RNA polymerase beta chain family. As to quaternary structure, the RNAP catalytic core consists of 2 alpha, 1 beta, 1 beta' and 1 omega subunit. When a sigma factor is associated with the core the holoenzyme is formed, which can initiate transcription.

The enzyme catalyses RNA(n) + a ribonucleoside 5'-triphosphate = RNA(n+1) + diphosphate. DNA-dependent RNA polymerase catalyzes the transcription of DNA into RNA using the four ribonucleoside triphosphates as substrates. In Leptospira interrogans serogroup Icterohaemorrhagiae serovar Lai (strain 56601), this protein is DNA-directed RNA polymerase subunit beta.